Here is a 251-residue protein sequence, read N- to C-terminus: Pyrroloquinoline-quinone synthase (251 aa).

This sequence belongs to the PqqC family.

It catalyses the reaction 6-(2-amino-2-carboxyethyl)-7,8-dioxo-1,2,3,4,7,8-hexahydroquinoline-2,4-dicarboxylate + 3 O2 = pyrroloquinoline quinone + 2 H2O2 + 2 H2O + H(+). The protein operates within cofactor biosynthesis; pyrroloquinoline quinone biosynthesis. In terms of biological role, ring cyclization and eight-electron oxidation of 3a-(2-amino-2-carboxyethyl)-4,5-dioxo-4,5,6,7,8,9-hexahydroquinoline-7,9-dicarboxylic-acid to PQQ. In Pseudomonas savastanoi pv. phaseolicola (strain 1448A / Race 6) (Pseudomonas syringae pv. phaseolicola (strain 1448A / Race 6)), this protein is Pyrroloquinoline-quinone synthase.